Consider the following 32-residue polypeptide: Growth hormone-related protein 4 (32 aa).

Cysteine 4 and cysteine 11 are joined by a disulfide.

The protein belongs to the somatotropin/prolactin family. Glycosylated. As to expression, placental basal zone cells.

The protein resides in the secreted. In Rattus norvegicus (Rat), this protein is Growth hormone-related protein 4.